We begin with the raw amino-acid sequence, 557 residues long: NAD(P)H-quinone oxidoreductase chain 4 (557 aa).

The next 14 helical transmembrane spans lie at 25–45 (FPWLSLSILFPIAGSLLVPFI), 57–77 (YALFIALTTFLITVGAYLKGF), 111–131 (LILLTSFITALAVLAAWPVSF), 133–153 (PKLFFFLILAMDGGQIAVFAV), 157–177 (LLFFLAWELELLPVYLLLAIW), 189–209 (FIIYTAGSSLFILLAGLAMGF), 230–250 (GFQLLCYGGLLIAFGVKLPIV), 264–284 (TAPVHMLLAGILLKMGGYALL), 298–318 (FAPLLIVLGVVNIIYAALTSF), 327–347 (IAYSSISHMGFVLIGIGSFST), 353–373 (AMLQMISHGLIGASLFFLVGA), 397–417 (FALWTVCSLASLALPGMSGFV), 438–458 (IVIAGLAAIGVILTPIYLLSM), and 485–505 (IYIIGSLLVPIIGIGLYPRIM).

This sequence belongs to the complex I subunit 4 family.

The protein localises to the cellular thylakoid membrane. It catalyses the reaction a plastoquinone + NADH + (n+1) H(+)(in) = a plastoquinol + NAD(+) + n H(+)(out). The enzyme catalyses a plastoquinone + NADPH + (n+1) H(+)(in) = a plastoquinol + NADP(+) + n H(+)(out). In terms of biological role, NDH-1 shuttles electrons from NAD(P)H, via FMN and iron-sulfur (Fe-S) centers, to quinones in the respiratory chain. The immediate electron acceptor for the enzyme in this species is believed to be plastoquinone. Couples the redox reaction to proton translocation (for every two electrons transferred, four hydrogen ions are translocated across the cytoplasmic membrane), and thus conserves the redox energy in a proton gradient. This is NAD(P)H-quinone oxidoreductase chain 4 from Prochlorococcus marinus (strain SARG / CCMP1375 / SS120).